We begin with the raw amino-acid sequence, 139 residues long: D-ribose pyranase (139 aa).

The active-site Proton donor is the His20. Substrate contacts are provided by residues Asp28, His106, and 128 to 130 (YAN).

This sequence belongs to the RbsD / FucU family. RbsD subfamily. Homodecamer.

The protein resides in the cytoplasm. It catalyses the reaction beta-D-ribopyranose = beta-D-ribofuranose. It participates in carbohydrate metabolism; D-ribose degradation; D-ribose 5-phosphate from beta-D-ribopyranose: step 1/2. Functionally, catalyzes the interconversion of beta-pyran and beta-furan forms of D-ribose. This chain is D-ribose pyranase, found in Cronobacter sakazakii (strain ATCC BAA-894) (Enterobacter sakazakii).